A 213-amino-acid chain; its full sequence is dITP/XTP pyrophosphatase (213 aa).

Serine 17–lysine 22 contacts substrate. The active-site Proton acceptor is aspartate 78. Residue aspartate 78 participates in Mg(2+) binding. Substrate contacts are provided by residues serine 79, phenylalanine 164–aspartate 167, lysine 187, and histidine 192–arginine 193.

Belongs to the HAM1 NTPase family. In terms of assembly, homodimer. Requires Mg(2+) as cofactor.

It carries out the reaction XTP + H2O = XMP + diphosphate + H(+). It catalyses the reaction dITP + H2O = dIMP + diphosphate + H(+). The enzyme catalyses ITP + H2O = IMP + diphosphate + H(+). Its function is as follows. Pyrophosphatase that catalyzes the hydrolysis of nucleoside triphosphates to their monophosphate derivatives, with a high preference for the non-canonical purine nucleotides XTP (xanthosine triphosphate), dITP (deoxyinosine triphosphate) and ITP. Seems to function as a house-cleaning enzyme that removes non-canonical purine nucleotides from the nucleotide pool, thus preventing their incorporation into DNA/RNA and avoiding chromosomal lesions. This is dITP/XTP pyrophosphatase from Bordetella parapertussis (strain 12822 / ATCC BAA-587 / NCTC 13253).